Consider the following 304-residue polypeptide: Glycine--tRNA ligase alpha subunit (304 aa).

The protein belongs to the class-II aminoacyl-tRNA synthetase family. As to quaternary structure, tetramer of two alpha and two beta subunits.

It localises to the cytoplasm. The enzyme catalyses tRNA(Gly) + glycine + ATP = glycyl-tRNA(Gly) + AMP + diphosphate. This chain is Glycine--tRNA ligase alpha subunit, found in Pectobacterium carotovorum subsp. carotovorum (strain PC1).